Reading from the N-terminus, the 453-residue chain is uncharacterized protein (453 aa).

Disordered regions lie at residues 140–161 (YGES…TRPQ) and 311–332 (TTTR…SASS).

This is an uncharacterized protein from Caenorhabditis elegans.